The chain runs to 156 residues: MIQSQINRNIRLDLADAILLSKAKKDLSFAEIADGTGLAEAFVTAALLGQQALPADAARQVGAKLDLDEDAILLLQMIPLRGCIDDRIPTDPTMYRFYEMLQVYGTTLKALVHEKFGDGIISAINFKLDVKKVADPEGGERAVITLDGKYLPTKPF.

Active-site residues include arginine 96, glutamate 99, and serine 122.

The protein belongs to the cyanase family. As to quaternary structure, homodecamer composed of five homodimers.

The enzyme catalyses cyanate + hydrogencarbonate + 3 H(+) = NH4(+) + 2 CO2. Catalyzes the reaction of cyanate with bicarbonate to produce ammonia and carbon dioxide. This is Cyanate hydratase (cynS) from Escherichia coli O157:H7.